A 91-amino-acid polypeptide reads, in one-letter code: Small ribosomal subunit protein uS19 (91 aa).

It belongs to the universal ribosomal protein uS19 family.

Functionally, protein S19 forms a complex with S13 that binds strongly to the 16S ribosomal RNA. In Methylacidiphilum infernorum (isolate V4) (Methylokorus infernorum (strain V4)), this protein is Small ribosomal subunit protein uS19.